The sequence spans 304 residues: Lipid droplet-associated hydrolase (304 aa).

Catalysis depends on S119, which acts as the Nucleophile. Active-site charge relay system residues include D250 and H279.

It belongs to the AB hydrolase superfamily. LDAH family.

The protein resides in the lipid droplet. It carries out the reaction a cholesterol ester + H2O = cholesterol + a fatty acid + H(+). In terms of biological role, probable serine lipid hydrolase associated with lipid droplets. Has low cholesterol esterase activity. Appears to lack triglyceride lipase activity. Involved in cholesterol and triglyceride homeostasis; stimulates cellular triglyceride accumulation and cellular cholesterol release. The sequence is that of Lipid droplet-associated hydrolase from Dictyostelium discoideum (Social amoeba).